Consider the following 240-residue polypeptide: Uridylate kinase (240 aa).

14–17 lines the ATP pocket; that stretch reads KLSG. Glycine 56 lines the UMP pocket. Positions 57 and 61 each coordinate ATP. UMP-binding positions include aspartate 76 and 137-144; that span reads TGNPFFTT. ATP is bound by residues threonine 164, tyrosine 170, and aspartate 173.

The protein belongs to the UMP kinase family. Homohexamer.

It is found in the cytoplasm. The enzyme catalyses UMP + ATP = UDP + ADP. It participates in pyrimidine metabolism; CTP biosynthesis via de novo pathway; UDP from UMP (UMPK route): step 1/1. Its activity is regulated as follows. Inhibited by UTP. Functionally, catalyzes the reversible phosphorylation of UMP to UDP. This Verminephrobacter eiseniae (strain EF01-2) protein is Uridylate kinase.